A 375-amino-acid chain; its full sequence is V-type proton ATPase subunit C (375 aa).

The protein belongs to the V-ATPase C subunit family. As to quaternary structure, V-ATPase is a heteromultimeric enzyme composed of a peripheral catalytic V1 complex (components A to H) attached to an integral membrane V0 proton pore complex (components: a, c, c'', d and e). Phosphorylated on Ser/Thr residues by WNK8.

It is found in the vacuole membrane. In terms of biological role, subunit of the peripheral V1 complex of vacuolar ATPase. Subunit C is necessary for the assembly of the catalytic sector of the enzyme and is likely to have a specific function in its catalytic activity. V-ATPase is responsible for acidifying a variety of intracellular compartments in eukaryotic cells. This chain is V-type proton ATPase subunit C (VHA-C), found in Arabidopsis thaliana (Mouse-ear cress).